The following is a 131-amino-acid chain: MDFQQLADVAEKWCSSTPFELIAAEETERRMDFYADPGVSFYVLCPDNGCGDSFHVWSESEDCLPFLQLAQDYISSCGKKTLHEVLEKVFKSFRPLLGLPDADDDAFEEYSADVEEEEPEADHPQMGVSQQ.

Tyrosine 34 is modified (phosphotyrosine). Over residues 107–120 (FEEYSADVEEEEPE) the composition is skewed to acidic residues. The tract at residues 107 to 131 (FEEYSADVEEEEPEADHPQMGVSQQ) is disordered.

Belongs to the MTURN family. In terms of processing, phosphorylation at Tyr-34 is essential for its ability to promote megakaryocyte differentiation. Expressed in the thymus, bone marrow and spleen.

The protein resides in the cytoplasm. In terms of biological role, promotes megakaryocyte differentiation by enhancing ERK and JNK signaling as well as up-regulating RUNX1 and FLI1 expression. Represses NF-kappa-B transcriptional activity by inhibiting phosphorylation of RELA at 'Ser- 536'. May be involved in early neuronal development. The protein is Maturin (Mturn) of Mus musculus (Mouse).